Here is a 332-residue protein sequence, read N- to C-terminus: Formamidase (332 aa).

The CN hydrolase domain occupies 14–259; it reads FLTALIQYPV…WEIVTAEVYP (246 aa). The active-site Proton acceptor is the Glu-60. Lys-132 acts as the Proton donor in catalysis. The Nucleophile role is filled by Cys-165.

This sequence belongs to the carbon-nitrogen hydrolase superfamily. Aliphatic amidase family.

The enzyme catalyses formamide + H2O = formate + NH4(+). Functionally, is an aliphatic amidase with a restricted substrate specificity, as it only hydrolyzes formamide. The sequence is that of Formamidase from Bacillus cereus (strain G9842).